Here is a 482-residue protein sequence, read N- to C-terminus: MEQTEFKEYIHDNLALVLPKLKENDDLVKNKKMLANGLVFYYLYFSEMTDENKVSEAIKTLIKDEETLTLDQVKKRLDQLDARPVETAKKTIESILNGNCAVFINGLDKAYILTTGKKKTRSLTEPTTEKVVRGPKVAFVEDIDTNLALIRQRTSHPKLITKKIMIGENKLKPAAIMYIEGKAKKSVIKEVKARLKNIQLEDIQDSGTLEELIEDNKYSPFPQIQNTERPDKVSSALFNGRVAILVDSSPFVLLVPVSLGILMQSPDDYYERWISASLIRSLRFASIFITLFLSSIYITLVSFHQGLLPTALAVTISANRENVPFPPIFEALLMEVTIELLREAGLRLPNPLGQTIGLVGGVVIGQAAVEANLVSSILVIVVSVIALASFTVPQYGMGLSFRVLRFISMFSAAILGLYGIILFMLVVYTHLTRQTSFGSPYFSPNGFFSLKNTDDSIIRLPIKNKPKEVNNPNEPKTDSTET.

The next 6 membrane-spanning stretches (helical) occupy residues 242 to 262, 284 to 304, 321 to 341, 351 to 371, 373 to 393, and 406 to 426; these read VAIL…LGIL, FASI…VSFH, ENVP…IELL, PLGQ…AVEA, LVSS…FTVP, and FISM…FMLV.

This sequence belongs to the GerABKA family.

Its subcellular location is the cell membrane. Forms a complex at the inner spore membrane which acts as a receptor for L-alanine, thus is involved in the stimulation of germination in response to alanine. Can stimulate germination in the absence of GerD and GerK gene products (fructose and glucose receptors, respectively), but the response is improved in their presence. The chain is Spore germination protein A1 (gerAA) from Bacillus subtilis (strain 168).